Consider the following 208-residue polypeptide: Fucoxanthin-chlorophyll a-c binding protein, chloroplastic (208 aa).

Residues 1 to 31 (MMTLASLPSTAIAGLASAAPKVQPRMAANDE) constitute a chloroplast transit peptide. Residues 102–118 (IPQLPYWLWIVMTIGIG) form a helical membrane-spanning segment.

This sequence belongs to the fucoxanthin chlorophyll protein family. As to quaternary structure, the LHC complex of chromophytic algae is composed of fucoxanthin, chlorophyll A and C bound non-covalently by fucoxanthin chlorophyll proteins (FCPs). The ratio of pigments in this LHC is; fucoxanthin: chlorophyll C: chlorophyll A; (0.6-1): (0.1-0.3): (1).

It localises to the plastid. Its subcellular location is the chloroplast thylakoid membrane. In terms of biological role, the light-harvesting complex (LHC) functions as a light receptor, it captures and delivers excitation energy to photosystems with which it is closely associated. Energy is transferred from the carotenoid and chlorophyll C (or B) to chlorophyll A and the photosynthetic reaction centers where it is used to synthesize ATP and reducing power. This chain is Fucoxanthin-chlorophyll a-c binding protein, chloroplastic (FCP), found in Isochrysis galbana (Marine planktonic alga).